We begin with the raw amino-acid sequence, 158 residues long: NKG2-F type II integral membrane protein (158 aa).

Polar residues predominate over residues 1-12; the sequence is MNKQRGTYSEVS. Positions 1–30 are disordered; the sequence is MNKQRGTYSEVSLAQDPKRQQRKLKGNKSS. Over 1–74 the chain is Cytoplasmic; that stretch reads MNKQRGTYSE…LPPPERLTAE (74 aa). A helical transmembrane segment spans residues 75–95; that stretch reads VLGIICIVLMATVLKTIVLIP. Residues 96-158 are Extracellular-facing; sequence CIGVLEQNNF…VLQRTLICFL (63 aa).

As to quaternary structure, can form disulfide-bonded heterodimer with CD94. In terms of tissue distribution, natural killer cells.

The protein localises to the membrane. In terms of biological role, may play a role as a receptor for the recognition of MHC class I HLA-E molecules by NK cells. The sequence is that of NKG2-F type II integral membrane protein (KLRC4) from Pan troglodytes (Chimpanzee).